The sequence spans 158 residues: C-type lection lectoxin-Enh3 (158 aa).

The first 23 residues, Met1 to Gly23, serve as a signal peptide directing secretion. 3 disulfide bridges follow: Cys26–Cys37, Cys54–Cys154, and Cys129–Cys146. Residues Arg33–Gln155 enclose the C-type lectin domain. The short motif at Glu119–Asn121 is the Mannose-binding element. Ca(2+) contacts are provided by Glu127, Asn142, and Asp143.

Belongs to the true venom lectin family. In terms of tissue distribution, expressed by the venom gland.

It localises to the secreted. Mannose-binding lectin which recognizes specific carbohydrate structures and agglutinates a variety of animal cells by binding to cell-surface glycoproteins and glycolipids. May be a calcium-dependent lectin. The protein is C-type lection lectoxin-Enh3 of Pseudoferania polylepis (Macleay's water snake).